A 49-amino-acid polypeptide reads, in one-letter code: Large ribosomal subunit protein bL33 (49 aa).

The interval 18–49 (ITTKNKRNNPERLELKKYSPRLKRTTLHRETK) is disordered. Over residues 25–34 (NNPERLELKK) the composition is skewed to basic and acidic residues.

Belongs to the bacterial ribosomal protein bL33 family.

In Lysinibacillus sphaericus (strain C3-41), this protein is Large ribosomal subunit protein bL33.